Here is a 411-residue protein sequence, read N- to C-terminus: LL-diaminopimelate aminotransferase (411 aa).

The substrate site is built by Y15 and G42. Pyridoxal 5'-phosphate is bound by residues Y72, 108–109 (AK), Y132, N188, Y219, and 247–249 (SFS). Substrate-binding residues include K109, Y132, and N188. K250 bears the N6-(pyridoxal phosphate)lysine mark. 2 residues coordinate pyridoxal 5'-phosphate: R258 and N293. Positions 293 and 389 each coordinate substrate.

The protein belongs to the class-I pyridoxal-phosphate-dependent aminotransferase family. LL-diaminopimelate aminotransferase subfamily. Homodimer. The cofactor is pyridoxal 5'-phosphate.

The catalysed reaction is (2S,6S)-2,6-diaminopimelate + 2-oxoglutarate = (S)-2,3,4,5-tetrahydrodipicolinate + L-glutamate + H2O + H(+). It participates in amino-acid biosynthesis; L-lysine biosynthesis via DAP pathway; LL-2,6-diaminopimelate from (S)-tetrahydrodipicolinate (aminotransferase route): step 1/1. Its function is as follows. Involved in the synthesis of meso-diaminopimelate (m-DAP or DL-DAP), required for both lysine and peptidoglycan biosynthesis. Catalyzes the direct conversion of tetrahydrodipicolinate to LL-diaminopimelate. The sequence is that of LL-diaminopimelate aminotransferase from Desulfitobacterium hafniense (strain Y51).